The primary structure comprises 375 residues: 2-methylcitrate synthase (375 aa).

The substrate site is built by lysine 72 and histidine 187. Histidine 222 is a catalytic residue. Residue lysine 255–phenylalanine 259 coordinates CoA. Residue histidine 261 is part of the active site. Arginine 270 contributes to the substrate binding site. Aspartate 312 is a catalytic residue. 2 residues coordinate substrate: arginine 337 and arginine 356.

It belongs to the citrate synthase family. Homodimer.

It catalyses the reaction propanoyl-CoA + oxaloacetate + H2O = (2S,3S)-2-methylcitrate + CoA + H(+). The catalysed reaction is oxaloacetate + acetyl-CoA + H2O = citrate + CoA + H(+). It functions in the pathway organic acid metabolism; propanoate degradation. Its pathway is carbohydrate metabolism; tricarboxylic acid cycle; isocitrate from oxaloacetate: step 1/2. Its function is as follows. Involved in the catabolism of short chain fatty acids (SCFA) via the tricarboxylic acid (TCA)(acetyl degradation route) and via the 2-methylcitrate cycle II (propionate degradation route). Catalyzes the Claisen condensation of propionyl-CoA and oxaloacetate (OAA) to yield 2-methylcitrate (2-MC) and CoA. Catalyzes the condensation of oxaloacetate with acetyl-CoA. In Shewanella oneidensis (strain ATCC 700550 / JCM 31522 / CIP 106686 / LMG 19005 / NCIMB 14063 / MR-1), this protein is 2-methylcitrate synthase (prpC).